Reading from the N-terminus, the 313-residue chain is MKSHQFSTALCQNTTESNGQPLRFPSPAKLNLFLYINGKFPNGYHELQTLFQFLDFGDWLDISIREQDNQIVLTPEIPNLKTENNLIYRAAKLLQEKANIQLGANIHLDKILPMGGGVGGGSSNAATALVSLNYLWQANLSIDELAKLGLTLGADVPIFVHGHAAFAEGVGEKITYCEPAEKWFVILKPDDSISTAVIFQDPNLPRNTPKKSLAQLLSEPYKNDCEKVVINHYSNVEKALNWLLQYAPARLTGTGACVFAEFDHEAEAQAVFRQKPEAFFGFVAKGLNVSPLHAMLKQLSSTHTHRQSKPEVL.

K29 is an active-site residue. 113 to 123 (PMGGGVGGGSS) lines the ATP pocket. The active site involves D155.

This sequence belongs to the GHMP kinase family. IspE subfamily.

It carries out the reaction 4-CDP-2-C-methyl-D-erythritol + ATP = 4-CDP-2-C-methyl-D-erythritol 2-phosphate + ADP + H(+). It functions in the pathway isoprenoid biosynthesis; isopentenyl diphosphate biosynthesis via DXP pathway; isopentenyl diphosphate from 1-deoxy-D-xylulose 5-phosphate: step 3/6. Its function is as follows. Catalyzes the phosphorylation of the position 2 hydroxy group of 4-diphosphocytidyl-2C-methyl-D-erythritol. The sequence is that of 4-diphosphocytidyl-2-C-methyl-D-erythritol kinase from Haemophilus influenzae (strain ATCC 51907 / DSM 11121 / KW20 / Rd).